The following is a 485-amino-acid chain: Chromosomal replication initiator protein DnaA (485 aa).

A domain I, interacts with DnaA modulators region spans residues 1–74 (MEKSKNIWSL…ILTNNGYDNV (74 aa)). Positions 74–140 (VTIVFTNQSP…EEEPKNFKNP (67 aa)) are domain II. The interval 141–357 (FLKKRYTFEN…AAVTKLKAYI (217 aa)) is domain III, AAA+ region. The ATP site is built by Gly185, Gly187, Lys188, and Thr189. A domain IV, binds dsDNA region spans residues 358–485 (DLDNIEIDID…TELMNKIKKN (128 aa)).

Belongs to the DnaA family. Oligomerizes as a right-handed, spiral filament on DNA at oriC.

Its subcellular location is the cytoplasm. Plays an essential role in the initiation and regulation of chromosomal replication. ATP-DnaA binds to the origin of replication (oriC) to initiate formation of the DNA replication initiation complex once per cell cycle. Binds the DnaA box (a 9 base pair repeat at the origin) and separates the double-stranded (ds)DNA. Forms a right-handed helical filament on oriC DNA; dsDNA binds to the exterior of the filament while single-stranded (ss)DNA is stabiized in the filament's interior. The ATP-DnaA-oriC complex binds and stabilizes one strand of the AT-rich DNA unwinding element (DUE), permitting loading of DNA polymerase. After initiation quickly degrades to an ADP-DnaA complex that is not apt for DNA replication. Binds acidic phospholipids. The protein is Chromosomal replication initiator protein DnaA of Borreliella afzelii (strain PKo) (Borrelia afzelii).